We begin with the raw amino-acid sequence, 271 residues long: Shikimate dehydrogenase (NADP(+)) (271 aa).

Shikimate contacts are provided by residues 19–21 (SLS) and threonine 65. The Proton acceptor role is filled by lysine 69. Glutamate 81 serves as a coordination point for NADP(+). Positions 90 and 105 each coordinate shikimate. NADP(+) contacts are provided by residues 128 to 132 (GAGGA), 150 to 155 (NRTIEK), and isoleucine 211. A shikimate-binding site is contributed by tyrosine 213. Glycine 234 contacts NADP(+).

This sequence belongs to the shikimate dehydrogenase family. In terms of assembly, homodimer.

It carries out the reaction shikimate + NADP(+) = 3-dehydroshikimate + NADPH + H(+). Its pathway is metabolic intermediate biosynthesis; chorismate biosynthesis; chorismate from D-erythrose 4-phosphate and phosphoenolpyruvate: step 4/7. Its function is as follows. Involved in the biosynthesis of the chorismate, which leads to the biosynthesis of aromatic amino acids. Catalyzes the reversible NADPH linked reduction of 3-dehydroshikimate (DHSA) to yield shikimate (SA). The chain is Shikimate dehydrogenase (NADP(+)) from Pyrococcus furiosus (strain ATCC 43587 / DSM 3638 / JCM 8422 / Vc1).